Consider the following 173-residue polypeptide: Photosystem I assembly protein Ycf3 (173 aa).

3 TPR repeats span residues 35-68, 72-105, and 120-153; these read AFVYYRDGMSAQAEGEYAEALEYYEEALTLEEDT, GYILYNMGLIYASNGDHDKALELYHQAIELNPRL, and GEKAKEDGDHDGGEALFDQAADYWIRAIRMAPNN.

This sequence belongs to the Ycf3 family.

It localises to the cellular thylakoid membrane. Essential for the assembly of the photosystem I (PSI) complex. May act as a chaperone-like factor to guide the assembly of the PSI subunits. This is Photosystem I assembly protein Ycf3 from Trichormus variabilis (strain ATCC 29413 / PCC 7937) (Anabaena variabilis).